The sequence spans 240 residues: 3-dehydroquinate dehydratase (240 aa).

3-dehydroquinate-binding positions include Ser-15, 42–44 (EWR), and Arg-73. His-132 serves as the catalytic Proton donor/acceptor. The Schiff-base intermediate with substrate role is filled by Lys-160. Residues Arg-202, Ser-221, and Gln-225 each coordinate 3-dehydroquinate.

The protein belongs to the type-I 3-dehydroquinase family. As to quaternary structure, homodimer.

It carries out the reaction 3-dehydroquinate = 3-dehydroshikimate + H2O. The protein operates within metabolic intermediate biosynthesis; chorismate biosynthesis; chorismate from D-erythrose 4-phosphate and phosphoenolpyruvate: step 3/7. Its function is as follows. Involved in the third step of the chorismate pathway, which leads to the biosynthesis of aromatic amino acids. Catalyzes the cis-dehydration of 3-dehydroquinate (DHQ) and introduces the first double bond of the aromatic ring to yield 3-dehydroshikimate. This Latilactobacillus sakei subsp. sakei (strain 23K) (Lactobacillus sakei subsp. sakei) protein is 3-dehydroquinate dehydratase.